The chain runs to 137 residues: Nucleoside diphosphate kinase (137 aa).

Positions 10, 59, 87, 93, 104, and 114 each coordinate ATP. Histidine 117 (pros-phosphohistidine intermediate) is an active-site residue.

This sequence belongs to the NDK family. Homotetramer. It depends on Mg(2+) as a cofactor.

It localises to the cytoplasm. The catalysed reaction is a 2'-deoxyribonucleoside 5'-diphosphate + ATP = a 2'-deoxyribonucleoside 5'-triphosphate + ADP. It catalyses the reaction a ribonucleoside 5'-diphosphate + ATP = a ribonucleoside 5'-triphosphate + ADP. In terms of biological role, major role in the synthesis of nucleoside triphosphates other than ATP. The ATP gamma phosphate is transferred to the NDP beta phosphate via a ping-pong mechanism, using a phosphorylated active-site intermediate. The protein is Nucleoside diphosphate kinase of Streptomyces griseus subsp. griseus (strain JCM 4626 / CBS 651.72 / NBRC 13350 / KCC S-0626 / ISP 5235).